The following is a 354-amino-acid chain: Membrane progestin receptor beta (354 aa).

The Cytoplasmic segment spans residues 1–75 (MTTAILQRLS…FFSLFQKHNE (75 aa)). Residues 76–96 (VVNVWTHLLAALAVLLRFWAF) form a helical membrane-spanning segment. Over 97–111 (VETEGLPWTSAHTLP) the chain is Extracellular. Residues 112-132 (LLLYVLSSITYLTFSLLAHLL) form a helical membrane-spanning segment. The Cytoplasmic portion of the chain corresponds to 133-174 (QSKSELSHYTFYFVDYVGVSVYQYGSALVHFFYASDQAWYER). Residues 175–195 (FWLFFLPAAAFCGWLSCTGCC) traverse the membrane as a helical segment. Over 196–213 (YAKYRYRRPYPVMRKVCQ) the chain is Extracellular. Residues 214 to 234 (VVPAGLAFILDISPVAHRVAL) form a helical membrane-spanning segment. At 235–243 (CHLSGCQEQ) the chain is on the cytoplasmic side. The chain crosses the membrane as a helical span at residues 244 to 264 (AAWYHTLQIVFFLVSAYFFSC). At 265–283 (PVPEKYFPGSCDIVGHGHQ) the chain is on the extracellular side. Residues 284 to 304 (IFHAFLSICTLSQLEAILLDY) traverse the membrane as a helical segment. The Cytoplasmic segment spans residues 305–319 (KGRQEIFLHRHSPLS). The helical transmembrane segment at 320–340 (IYAACLSFFFLVACSGATAAL) threads the bilayer. Residues 341–354 (LREKIKARLSKKDS) lie on the Extracellular side of the membrane.

The protein belongs to the ADIPOR family.

Its subcellular location is the cell membrane. In terms of biological role, steroid membrane receptor. Binds progesterone. May be involved in oocyte maturation. In Sus scrofa (Pig), this protein is Membrane progestin receptor beta (PAQR8).